The primary structure comprises 687 residues: Putative ammonium transporter 3 (687 aa).

Helical transmembrane passes span 39-59 (AVWI…FGLL), 77-97 (VVDV…FSYG), 134-154 (ASFL…SGAV), 162-182 (SYIL…HWVW), 196-216 (FAGC…ATVF), 240-260 (LGTF…VWGI), 272-292 (AVAT…ISFV), 299-319 (VNFL…ICAV), 323-343 (WHAL…LPLL), 352-372 (VGIV…VGIF), and 404-424 (CTAA…FLIS). Disordered stretches follow at residues 521 to 544 (RTNA…FNNQ), 549 to 568 (AVSS…RRTE), and 592 to 687 (PPEE…NPPV). The span at 549 to 564 (AVSSTVSTARNGPSTG) shows a compositional bias: polar residues. Composition is skewed to low complexity over residues 614-632 (SPSS…SPSI) and 648-665 (STAS…KNST).

The protein belongs to the ammonia transporter channel (TC 1.A.11.2) family.

The protein resides in the membrane. Functionally, involved in the uptake of ammonia. This chain is Putative ammonium transporter 3 (amt-3), found in Caenorhabditis elegans.